The sequence spans 544 residues: CTP synthase (544 aa).

The segment at 1-266 (MATNYIFVTG…DDFVCDRFRL (266 aa)) is amidoligase domain. Serine 14 lines the CTP pocket. Serine 14 contacts UTP. Residues 15–20 (SLGKGI) and aspartate 72 each bind ATP. 2 residues coordinate Mg(2+): aspartate 72 and glutamate 140. CTP contacts are provided by residues 147–149 (DIE), 187–192 (KTKPTQ), and lysine 223. UTP contacts are provided by residues 187–192 (KTKPTQ) and lysine 223. 239 to 241 (KDV) is an ATP binding site. The 252-residue stretch at 291–542 (TIGMVGKYVE…VKAAKEHQGK (252 aa)) folds into the Glutamine amidotransferase type-1 domain. Glycine 352 is an L-glutamine binding site. Residue cysteine 379 is the Nucleophile; for glutamine hydrolysis of the active site. Residues 380–383 (LGMQ), glutamate 403, and arginine 470 contribute to the L-glutamine site. Active-site residues include histidine 515 and glutamate 517.

This sequence belongs to the CTP synthase family. Homotetramer.

It carries out the reaction UTP + L-glutamine + ATP + H2O = CTP + L-glutamate + ADP + phosphate + 2 H(+). The enzyme catalyses L-glutamine + H2O = L-glutamate + NH4(+). It catalyses the reaction UTP + NH4(+) + ATP = CTP + ADP + phosphate + 2 H(+). Its pathway is pyrimidine metabolism; CTP biosynthesis via de novo pathway; CTP from UDP: step 2/2. With respect to regulation, allosterically activated by GTP, when glutamine is the substrate; GTP has no effect on the reaction when ammonia is the substrate. The allosteric effector GTP functions by stabilizing the protein conformation that binds the tetrahedral intermediate(s) formed during glutamine hydrolysis. Inhibited by the product CTP, via allosteric rather than competitive inhibition. In terms of biological role, catalyzes the ATP-dependent amination of UTP to CTP with either L-glutamine or ammonia as the source of nitrogen. Regulates intracellular CTP levels through interactions with the four ribonucleotide triphosphates. This chain is CTP synthase, found in Glaesserella parasuis serovar 5 (strain SH0165) (Haemophilus parasuis).